The primary structure comprises 515 residues: Folate synthesis bifunctional protein, mitochondrial (515 aa).

A mitochondrion-targeting transit peptide spans 1 to 28; the sequence is MSILKCLGVRGNQLCAARNYLKVLGFSS. Residues 47-172 are HPPK; sequence VIALGSNVGD…PFVMAPLMDL (126 aa). The Pterin-binding domain occupies 230–498; that stretch reads TLVMGILNLT…NVKDNLDAVK (269 aa). The tract at residues 232-515 is DHPS; it reads VMGILNLTPD…QKSSPIKFKQ (284 aa). Residue N237 coordinates Mg(2+). (7,8-dihydropterin-6-yl)methyl diphosphate-binding positions include T277, D314, N333, D406, K451, and 486–488; that span reads RVH.

This sequence in the N-terminal section; belongs to the HPPK family. The protein in the C-terminal section; belongs to the DHPS family. As to quaternary structure, homomultimer. The cofactor is Mg(2+).

It is found in the mitochondrion. It carries out the reaction 6-hydroxymethyl-7,8-dihydropterin + ATP = (7,8-dihydropterin-6-yl)methyl diphosphate + AMP + H(+). It catalyses the reaction (7,8-dihydropterin-6-yl)methyl diphosphate + 4-aminobenzoate = 7,8-dihydropteroate + diphosphate. It participates in cofactor biosynthesis; tetrahydrofolate biosynthesis; 2-amino-4-hydroxy-6-hydroxymethyl-7,8-dihydropteridine diphosphate from 7,8-dihydroneopterin triphosphate: step 4/4. Its pathway is cofactor biosynthesis; tetrahydrofolate biosynthesis; 7,8-dihydrofolate from 2-amino-4-hydroxy-6-hydroxymethyl-7,8-dihydropteridine diphosphate and 4-aminobenzoate: step 1/2. In terms of biological role, catalyzes the first two consecutive steps of tetrahydrofolate biosynthesis. The sequence is that of Folate synthesis bifunctional protein, mitochondrial from Pisum sativum (Garden pea).